The primary structure comprises 847 residues: Guanine nucleotide exchange factor VAV3 (847 aa).

A Calponin-homology (CH) domain is found at 1 to 119 (MEPWKQCAQW…ETLSRLSRTP (119 aa)). Y141 is subject to Phosphotyrosine. One can recognise a DH domain in the interval 192 to 371 (IRSCCLAEIR…KDLAQYVNEV (180 aa)). Residues 400–502 (RPQGDGEIRI…WLEQFEMALS (103 aa)) form the PH domain. Residues 513-562 (FHDFKMHTFTRVTSCRVCQMLLRGTFYQGYLCFKCGAKAHKECLGRVDNC) form a Phorbol-ester/DAG-type zinc finger. Residues 560 to 847 (DNCGRVNSVE…FPSTYVEEDE (288 aa)) form a sufficient for interaction with ROS1 region. In terms of domain architecture, SH3 1 spans 592 to 660 (PGLPKMQVIR…PSDAVKPSPC (69 aa)). The 95-residue stretch at 672–766 (WYAGPMERLQ…TLDTTLQFPY (95 aa)) folds into the SH2 domain. An SH3 2 domain is found at 788–847 (KVLGIAIARYDFCARDMRELSLLKGDMVKIYTKMSANGWWRGEVNGRVGWFPSTYVEEDE).

As to quaternary structure, interacts with the PH domain of APS. Interacts with ROS1; constitutive interaction that mediates VAV3 phosphorylation. Interacts (via SH2 domains) with the phosphorylated form of EPHA2. In terms of processing, phosphorylated. Phosphorylation can be mediated by ROS1. In osteoclasts, undergoes tyrosine phosphorylation in response to CSF1. Abundantly expressed in osteoclasts and mature osteoblasts. Also expressed in bone marrow macrophages (at protein level):.

Exchange factor for GTP-binding proteins RhoA, RhoG and, to a lesser extent, Rac1. Binds physically to the nucleotide-free states of those GTPases. Plays an important role in angiogenesis. Its recruitment by phosphorylated EPHA2 is critical for EFNA1-induced RAC1 GTPase activation and vascular endothelial cell migration and assembly. May be important for integrin-mediated signaling, at least in some cell types. In osteoclasts, along with SYK tyrosine kinase, required for signaling through integrin alpha-v/beta-1 (ITAGV-ITGB1), a crucial event for osteoclast proper cytoskeleton organization and function. This signaling pathway involves RAC1, but not RHO, activation. Necessary for proper wound healing. In the course of wound healing, required for the phagocytotic cup formation preceding macrophage phagocytosis of apoptotic neutrophils. Responsible for integrin beta-2-mediated macrophage adhesion and, to a lesser extent, contributes to beta-3-mediated adhesion. Does not affect integrin beta-1-mediated adhesion. This chain is Guanine nucleotide exchange factor VAV3 (Vav3), found in Mus musculus (Mouse).